A 165-amino-acid chain; its full sequence is NADH-quinone oxidoreductase subunit I (165 aa).

4Fe-4S ferredoxin-type domains follow at residues 57 to 86 (RRYE…IESE) and 96 to 125 (TRYD…ETHI). Positions 66, 69, 72, 76, 105, 108, 111, and 115 each coordinate [4Fe-4S] cluster.

This sequence belongs to the complex I 23 kDa subunit family. NDH-1 is composed of 14 different subunits. Subunits NuoA, H, J, K, L, M, N constitute the membrane sector of the complex. The cofactor is [4Fe-4S] cluster.

The protein localises to the cell inner membrane. It carries out the reaction a quinone + NADH + 5 H(+)(in) = a quinol + NAD(+) + 4 H(+)(out). In terms of biological role, NDH-1 shuttles electrons from NADH, via FMN and iron-sulfur (Fe-S) centers, to quinones in the respiratory chain. The immediate electron acceptor for the enzyme in this species is believed to be ubiquinone. Couples the redox reaction to proton translocation (for every two electrons transferred, four hydrogen ions are translocated across the cytoplasmic membrane), and thus conserves the redox energy in a proton gradient. In Methylibium petroleiphilum (strain ATCC BAA-1232 / LMG 22953 / PM1), this protein is NADH-quinone oxidoreductase subunit I.